The chain runs to 341 residues: ATPase GET3 (341 aa).

34–41 (KGGVGKTT) serves as a coordination point for ATP. Residue Asp63 is part of the active site. Positions 245 and 272 each coordinate ATP. Zn(2+)-binding residues include Cys283 and Cys286.

This sequence belongs to the arsA ATPase family. In terms of assembly, homodimer.

The protein localises to the cytoplasm. It localises to the endoplasmic reticulum. In terms of biological role, ATPase required for the post-translational delivery of tail-anchored (TA) proteins to the endoplasmic reticulum. Recognizes and selectively binds the transmembrane domain of TA proteins in the cytosol. This complex then targets to the endoplasmic reticulum by membrane-bound receptors, where the tail-anchored protein is released for insertion. This process is regulated by ATP binding and hydrolysis. ATP binding drives the homodimer towards the closed dimer state, facilitating recognition of newly synthesized TA membrane proteins. ATP hydrolysis is required for insertion. Subsequently, the homodimer reverts towards the open dimer state, lowering its affinity for the membrane-bound receptor, and returning it to the cytosol to initiate a new round of targeting. This is ATPase GET3 from Ajellomyces capsulatus (strain H143) (Darling's disease fungus).